Here is a 669-residue protein sequence, read N- to C-terminus: Coagulation factor XIII B chain (669 aa).

Residues 1-21 (MMTLRHLPFILLLILSGELYA) form the signal peptide. 10 Sushi domains span residues 25-89 (QCDF…PRCY), 90-149 (KKCL…SCRK), 152-211 (ETCL…QCNK), 212-270 (LMCS…ICEG), 273-330 (NRCP…KCIE), 335-392 (VACE…ECVE), 395-453 (ENCK…VCLE), 454-517 (PCTI…PMCI), 523-581 (GMCA…SCLE), and 582-648 (PCTL…PKCT). 20 cysteine pairs are disulfide-bonded: cysteine 26-cysteine 77, cysteine 60-cysteine 88, cysteine 92-cysteine 136, cysteine 119-cysteine 147, cysteine 154-cysteine 198, cysteine 181-cysteine 209, cysteine 214-cysteine 256, cysteine 242-cysteine 268, cysteine 275-cysteine 317, cysteine 303-cysteine 328, cysteine 337-cysteine 379, cysteine 365-cysteine 390, cysteine 397-cysteine 440, cysteine 426-cysteine 451, cysteine 455-cysteine 506, cysteine 487-cysteine 516, cysteine 525-cysteine 568, cysteine 554-cysteine 579, cysteine 583-cysteine 637, and cysteine 617-cysteine 647. The N-linked (GlcNAc...) asparagine glycan is linked to asparagine 163. N-linked (GlcNAc...) asparagine glycosylation is present at asparagine 546.

As to quaternary structure, tetramer of two A chains (F13A1) and two B (F13B) chains. In terms of tissue distribution, predominantly expressed in liver and kidney.

The protein localises to the secreted. Its function is as follows. The B chain of factor XIII is not catalytically active, but is thought to stabilize the A subunits and regulate the rate of transglutaminase formation by thrombin. This is Coagulation factor XIII B chain (F13b) from Mus musculus (Mouse).